We begin with the raw amino-acid sequence, 417 residues long: Putative competence-damage inducible protein (417 aa).

It belongs to the CinA family.

The polypeptide is Putative competence-damage inducible protein (Shouchella clausii (strain KSM-K16) (Alkalihalobacillus clausii)).